Here is a 141-residue protein sequence, read N- to C-terminus: Large ribosomal subunit protein uL23A (141 aa).

Residues S68 and S70 each carry the phosphoserine modification.

The protein belongs to the universal ribosomal protein uL23 family. Component of the large ribosomal subunit (LSU). Mature yeast ribosomes consist of a small (40S) and a large (60S) subunit. The 40S small subunit contains 1 molecule of ribosomal RNA (18S rRNA) and at least 33 different proteins. The large 60S subunit contains 3 rRNA molecules (25S, 5.8S and 5S rRNA) and at least 46 different proteins. uL23 is associated with the polypeptide exit tunnel.

It localises to the cytoplasm. Functionally, this protein binds to a specific region on the 26S rRNA. In terms of biological role, component of the ribosome, a large ribonucleoprotein complex responsible for the synthesis of proteins in the cell. The small ribosomal subunit (SSU) binds messenger RNAs (mRNAs) and translates the encoded message by selecting cognate aminoacyl-transfer RNA (tRNA) molecules. The large subunit (LSU) contains the ribosomal catalytic site termed the peptidyl transferase center (PTC), which catalyzes the formation of peptide bonds, thereby polymerizing the amino acids delivered by tRNAs into a polypeptide chain. The nascent polypeptides leave the ribosome through a tunnel in the LSU and interact with protein factors that function in enzymatic processing, targeting, and the membrane insertion of nascent chains at the exit of the ribosomal tunnel. uL23 is a major component of the universal docking site for these factors at the polypeptide exit tunnel. The chain is Large ribosomal subunit protein uL23A (rpl2501) from Schizosaccharomyces pombe (strain 972 / ATCC 24843) (Fission yeast).